The chain runs to 382 residues: Mannitol-1-phosphate 5-dehydrogenase (382 aa).

Position 3 to 14 (3 to 14 (ALHFGAGNIGRG)) interacts with NAD(+).

The protein belongs to the mannitol dehydrogenase family.

The catalysed reaction is D-mannitol 1-phosphate + NAD(+) = beta-D-fructose 6-phosphate + NADH + H(+). The chain is Mannitol-1-phosphate 5-dehydrogenase from Salmonella enteritidis PT4 (strain P125109).